The sequence spans 273 residues: Phosphate import ATP-binding protein PstB (273 aa).

The region spanning 17 to 259 (LSAENLSIFY…DKTNNIFQNP (243 aa)) is the ABC transporter domain. Residue 49-56 (GPSGCGKS) coordinates ATP.

This sequence belongs to the ABC transporter superfamily. Phosphate importer (TC 3.A.1.7) family. In terms of assembly, the complex is composed of two ATP-binding proteins (PstB), two transmembrane proteins (PstC and PstA) and a solute-binding protein (PstS).

The protein resides in the cell inner membrane. The catalysed reaction is phosphate(out) + ATP + H2O = ADP + 2 phosphate(in) + H(+). Functionally, part of the ABC transporter complex PstSACB involved in phosphate import. Responsible for energy coupling to the transport system. The chain is Phosphate import ATP-binding protein PstB from Trichodesmium erythraeum (strain IMS101).